Consider the following 341-residue polypeptide: MRLCLIPRNTGTPQRVLPPVVWSTPSRKKPVLSARNSMMFGHLSPMRIPHLRGKFNLQLPSLDEQVIPARLPKTEVRAEEPKEATEVKDQVETQEQEDNKRGPCSNGEAASTSRPLETQGNLTSSWYNPRPLEGNVHLKSLTEKNQTDKAQVHAVSFYSKGHGVASSHSPAGGILPFGRPDSLPTVLPAPVPGCSLWPEKAALKVLGKDYLPSSPGLLMVGEDMQPKDPAALGSSRSSPPKAAGHRSHKRKLSGPPLQLQPTPPLQLRWDRDEGPPPAKLPCLSPEALLVGQASQREGHLQQGNMHKNMRVLSRTSKFRRLRQLLRRRKKRRQGRCGGSRL.

Disordered regions lie at residues 70–131 (RLPK…NPRP) and 218–279 (LMVG…PPAK). The span at 72–101 (PKTEVRAEEPKEATEVKDQVETQEQEDNKR) shows a compositional bias: basic and acidic residues. Over residues 108-127 (EAASTSRPLETQGNLTSSWY) the composition is skewed to polar residues. The span at 243-252 (AGHRSHKRKL) shows a compositional bias: basic residues.

The protein belongs to the UPF0607 family.

This is Putative UPF0607 protein ENSP00000383144 from Homo sapiens (Human).